Consider the following 341-residue polypeptide: Protein RecA, plasmid (341 aa).

80-87 (GAESSGKT) contacts ATP.

It belongs to the RecA family.

It is found in the cytoplasm. In terms of biological role, can catalyze the hydrolysis of ATP in the presence of single-stranded DNA, the ATP-dependent uptake of single-stranded DNA by duplex DNA, and the ATP-dependent hybridization of homologous single-stranded DNAs. It interacts with LexA causing its activation and leading to its autocatalytic cleavage. In Lactococcus lactis subsp. lactis (Streptococcus lactis), this protein is Protein RecA, plasmid.